Here is a 99-residue protein sequence, read N- to C-terminus: Spore coat protein F-like protein YraD (99 aa).

It belongs to the CotF family.

Its subcellular location is the spore coat. This is Spore coat protein F-like protein YraD (yraD) from Bacillus subtilis (strain 168).